We begin with the raw amino-acid sequence, 396 residues long: Trypacidin cluster transcription factor (396 aa).

The zn(2)-C6 fungal-type DNA-binding region spans 20–47 (CRACGLSKVRCSKEKPTCSRCRRRGTVC). Disordered regions lie at residues 54–120 (RPGR…LSTV), 190–218 (DPAPPDQSLPATTTIGRRASPPSGRESEA), and 346–365 (MHGAQGASPGQAFHGTPAPL). Basic and acidic residues predominate over residues 57 to 71 (RKPDSRSEVEPEPGH). The span at 72–82 (LSHPLPSPESS) shows a compositional bias: low complexity.

As to expression, specifically expressed in conidia.

It localises to the nucleus. Its function is as follows. Transcription factor that regulates the expression of the gene clusters that mediate the biosynthesis of trypacidin, a metabolite with antiprotozoal activity and a possible role in the infection process. Trypacidin is toxic for human pulmonary and bronchial epithelial cells by initiating the intracellular formation of nitric oxide (NO) and hydrogen peroxide (H(2)O(2)), thus triggering host necrotic cell death. In Aspergillus fumigatus (strain ATCC MYA-4609 / CBS 101355 / FGSC A1100 / Af293) (Neosartorya fumigata), this protein is Trypacidin cluster transcription factor.